The chain runs to 460 residues: Receptor-like cytosolic serine/threonine-protein kinase RBK2 (460 aa).

A disordered region spans residues 1–67 (MNSASAHDLR…DADTDVQCKN (67 aa)). The segment covering 7 to 23 (HDLRLLEVDKEKQDPKS) has biased composition (basic and acidic residues). Residues 143-415 (FSPENIIGRG…VELLLGHEDV (273 aa)) enclose the Protein kinase domain. ATP is bound by residues 149–157 (IGRGGYADV) and K171. D267 serves as the catalytic Proton acceptor. A Phosphothreonine modification is found at T307. Y315 is modified (phosphotyrosine).

This sequence belongs to the protein kinase superfamily. Ser/Thr protein kinase family. Interacts with ARAC5 and ARAC10.

Its subcellular location is the cytoplasm. It catalyses the reaction L-seryl-[protein] + ATP = O-phospho-L-seryl-[protein] + ADP + H(+). The enzyme catalyses L-threonyl-[protein] + ATP = O-phospho-L-threonyl-[protein] + ADP + H(+). This is Receptor-like cytosolic serine/threonine-protein kinase RBK2 (RBK2) from Arabidopsis thaliana (Mouse-ear cress).